A 449-amino-acid chain; its full sequence is Phosphoglucosamine mutase (449 aa).

S100 acts as the Phosphoserine intermediate in catalysis. S100, D241, D243, and D245 together coordinate Mg(2+). S100 carries the post-translational modification Phosphoserine.

This sequence belongs to the phosphohexose mutase family. Mg(2+) serves as cofactor. In terms of processing, activated by phosphorylation.

It catalyses the reaction alpha-D-glucosamine 1-phosphate = D-glucosamine 6-phosphate. Its function is as follows. Catalyzes the conversion of glucosamine-6-phosphate to glucosamine-1-phosphate. The sequence is that of Phosphoglucosamine mutase from Clostridium botulinum (strain ATCC 19397 / Type A).